Reading from the N-terminus, the 321-residue chain is Cytochrome c biogenesis protein CcsA (321 aa).

The next 8 membrane-spanning stretches (helical) occupy residues 17–37 (VVSI…IIGL), 46–63 (MTTF…WIYL), 71–91 (LYES…VPYF), 98–118 (LKAI…SGLL), 143–163 (MVLG…LLVI), 225–245 (IISL…VWAN), 259–273 (TWAF…IYLH), and 286–306 (AIVA…VNLL).

The protein belongs to the CcmF/CycK/Ccl1/NrfE/CcsA family. In terms of assembly, may interact with Ccs1.

The protein resides in the plastid. It is found in the chloroplast thylakoid membrane. In terms of biological role, required during biogenesis of c-type cytochromes (cytochrome c6 and cytochrome f) at the step of heme attachment. The sequence is that of Cytochrome c biogenesis protein CcsA from Morus indica (Mulberry).